The following is a 5430-amino-acid chain: Microtubule-actin cross-linking factor 1 (5430 aa).

The tract at residues 1 to 47 is disordered; sequence MSSSDEETLSERSCRSERSCRSERSYRSERSGSLSPCPPGDTLPWNL. The segment at 1 to 295 is actin-binding; that stretch reads MSSSDEETLS…VITYVSSIYD (295 aa). Residue Ser-4 is modified to Phosphoserine. Positions 9 to 30 are enriched in basic and acidic residues; that stretch reads LSERSCRSERSCRSERSYRSER. Phosphoserine occurs at positions 35 and 57. 2 consecutive Calponin-homology (CH) domains span residues 78 to 181 and 194 to 298; these read RVQK…LHFQ and MSAK…DAFP. LRR repeat units lie at residues 148 to 171 and 240 to 264; these read QRQVKLVNIRNDDITDGNPKLTLG and LVDMERVQIQSNRENLEQAFEVAER. A Phosphoserine modification is found at Ser-280. 2 LRR repeats span residues 377-399 and 441-464; these read LYKLLEVWIEFGRIKLPQGYHPN and LNCEEKLTLAKNTLQADAAHLESG. The region spanning 868–925 is the SH3 domain; it reads KSTLSVKAICDYRQIEITICKNDECVLEDNSQRTKWKVISPTGNEAMVPSVCLLIPPP. One copy of the LRR 5 repeat lies at 1050–1073; sequence ISELKNIRLRLEECEQRLLKQIQS. At Ser-1122 the chain carries Phosphoserine. LRR repeat units lie at residues 1128–1154, 1187–1210, and 1257–1282; these read ATTLRSELNLMVEKMDHVYGLSIVCLN, PADLSALESHRTTLQHWLSDVKDK, and HRVIAQLETRQSEVESIQEVLRDYRA. Phosphoserine is present on residues Ser-1367 and Ser-1376. 2 LRR repeats span residues 1579–1602 and 1629–1653; these read QQELSALQQNQSDLKDLQGDIQNH and LTALREKLYQAKEQYEGLQDRTREA. Spectrin repeat units follow at residues 1816-1891 and 1933-2041; these read ELQK…NFEE and QYQQ…ALLQ. Residue Ser-1860 is modified to Phosphoserine. The LRR 11 repeat unit spans residues 1869–1891; sequence KGDLRFVTISGQKVLETENNFEE. LRR repeat units follow at residues 2058-2083 and 2194-2220; these read LQSMKEVEQNLEGEQVAALSSGLIQE and IQELTLEMEDQKENLGTLEHLVTALGS. One copy of the Spectrin 3 repeat lies at 2399–2507; sequence RMEEVQKEAS…TVARQKQLEE (109 aa). 2 positions are modified to phosphoserine: Ser-2429 and Ser-2454. LRR repeat units lie at residues 2444–2467, 2534–2557, and 2702–2725; these read KAFLAELEQNSPKIQKVKEALAGL, GVLGPLSIDPNMLNAQKQQVQFML, and KKRLETVALPLQGLEDLAADRMNR. Spectrin repeat units lie at residues 2733–2837 and 2842–2945; these read TQQF…SRLK and KAQK…SLEE. Ser-2769 and Ser-2895 each carry phosphoserine. 3 LRR repeats span residues 2984-3009, 3105-3127, and 3214-3237; these read NKNLEKLKAQREVLQALDPQVDYLRD, NKIQALRLDIEDSEAECRKMLEE, and KEQVDPLQVKLQQVNGLGQGLIQS. Spectrin repeat units lie at residues 3169–3274, 3281–3383, 3388–3491, 3714–3818, 3825–3927, 4047–4152, 4157–4261, 4267–4370, 4375–4481, 4486–4589, 4594–4700, 4707–4808, and 4812–4916; these read EDFY…QLQE, KFQD…QLED, AKQF…SLLE, RSQQ…ARLE, NQFW…ALDE, LAEK…KLED, AVQY…HKLE, LGQF…QQLQ, QAQG…KLEE, ATEF…RSLD, RAKQ…KLEE, QFMD…RLEQ, and QAEE…QRLE. Thr-3368 is subject to Phosphothreonine. 2 LRR repeats span residues 3737 to 3761 and 3846 to 3870; these read MALGPIRLEQDQTTAQLQVQKAFSI and AQLPPPAVDHEQLRQQQEEMRQLRE. Phosphoserine is present on Ser-4074. At Lys-4252 the chain carries N6-acetyllysine. Residues 4538-4561 form an LRR 22 repeat; it reads RDQIIELDQTGNQLKFLSQKQDVV. The segment at 4993–5023 is disordered; sequence PTHAPFIEKSRSGSRKSLNQPTPPPMPILSQ. Residue Ser-5009 is modified to Phosphoserine. EF-hand domains follow at residues 5083–5118 and 5119–5154; these read HKKSRVMDFFRRIDKDQDGKITRQEFIDGILASKFP and TTKLEMTAVADIFDRDGDGYIDYYEFVAALHPNKDA. Positions 5096, 5098, 5100, 5102, 5107, 5132, 5134, 5136, 5138, and 5143 each coordinate Ca(2+). In terms of domain architecture, GAR spans 5159-5231; the sequence is TDADKIEDEV…EFLVKNDPCR (73 aa). Residues 5159–5430 form a C-terminal tail region; the sequence is TDADKIEDEV…ASPRTPCPKR (272 aa). Residues 5247–5430 form a disordered region; it reads PEGASQGMTP…ASPRTPCPKR (184 aa). Residues 5267-5301 show a composition bias toward low complexity; sequence SSRAASPTRSSSSASQSNHSCTSMPSSPATPASGT. Thr-5296 carries the post-translational modification Phosphothreonine. The segment covering 5317 to 5341 has biased composition (polar residues); that stretch reads TFHSSRTSLAGDTSNSSSPASTGAK. Phosphoserine occurs at positions 5321 and 5334. Over residues 5352–5366 the composition is skewed to low complexity; sequence SRPGSRAGSRAGSRA. Residues 5355–5370 are 4 X 4 AA tandem repeats of [GS]-S-R-[AR]; the sequence is GSRAGSRAGSRASSRR. Phosphoserine occurs at positions 5372 and 5375. Over residues 5381–5391 the composition is skewed to polar residues; it reads ETQSACSDTSE. Positions 5392 to 5403 are enriched in low complexity; that stretch reads SSAAGGQGSSRR.

It belongs to the plakin or cytolinker family. As to quaternary structure, interacts with MAPRE1, CLASP1, CLASP2 and GOLGA4. Interacts with AXIN1 and LRP6. Found in a complex composed of MACF1, APC; AXIN1, CTNNB1 and GSK3B. Interacts with CAMSAP3. Phosphorylated on serine residues in the C-terminal tail by GSK3B. Phosphorylation inhibits microtubule-binding and this plays a critical role in bulge stem cell migration and skin wound repair. Wnt-signaling can repress phosphorylation.

Its subcellular location is the cytoplasm. It localises to the cytoskeleton. The protein localises to the golgi apparatus. The protein resides in the cell membrane. It is found in the cell projection. Its subcellular location is the ruffle membrane. It localises to the membrane. F-actin-binding protein which plays a role in cross-linking actin to other cytoskeletal proteins and also binds to microtubules. Plays an important role in ERBB2-dependent stabilization of microtubules at the cell cortex. Acts as a positive regulator of Wnt receptor signaling pathway and is involved in the translocation of AXIN1 and its associated complex (composed of APC, CTNNB1 and GSK3B) from the cytoplasm to the cell membrane. Has actin-regulated ATPase activity and is essential for controlling focal adhesions (FAs) assembly and dynamics. Interaction with CAMSAP3 at the minus ends of non-centrosomal microtubules tethers microtubules minus-ends to actin filaments, regulating focal adhesion size and cell migration. May play role in delivery of transport vesicles containing GPI-linked proteins from the trans-Golgi network through its interaction with GOLGA4. Plays a key role in wound healing and epidermal cell migration. Required for efficient upward migration of bulge cells in response to wounding and this function is primarily rooted in its ability to coordinate microtubule dynamics and polarize hair follicle stem cells. As a regulator of actin and microtubule arrangement and stabilization, it plays an essential role in neurite outgrowth, branching and spine formation during brain development. The protein is Microtubule-actin cross-linking factor 1 of Rattus norvegicus (Rat).